The following is a 209-amino-acid chain: Orotate phosphoribosyltransferase (209 aa).

5-phospho-alpha-D-ribose 1-diphosphate-binding positions include Arg-96, Lys-100, His-102, and 122–130; that span reads EDLISTGGS. Residue Ser-126 participates in orotate binding.

This sequence belongs to the purine/pyrimidine phosphoribosyltransferase family. PyrE subfamily. As to quaternary structure, homodimer. The cofactor is Mg(2+).

The catalysed reaction is orotidine 5'-phosphate + diphosphate = orotate + 5-phospho-alpha-D-ribose 1-diphosphate. Its pathway is pyrimidine metabolism; UMP biosynthesis via de novo pathway; UMP from orotate: step 1/2. Functionally, catalyzes the transfer of a ribosyl phosphate group from 5-phosphoribose 1-diphosphate to orotate, leading to the formation of orotidine monophosphate (OMP). The polypeptide is Orotate phosphoribosyltransferase (Streptococcus pyogenes serotype M12 (strain MGAS2096)).